We begin with the raw amino-acid sequence, 400 residues long: Acetate kinase (400 aa).

Asn-10 lines the Mg(2+) pocket. An ATP-binding site is contributed by Lys-17. Residue Arg-91 coordinates substrate. The Proton donor/acceptor role is filled by Asp-150. ATP-binding positions include 210–214 (HLGNG), 285–287 (DCR), and 333–337 (GIGEN). Glu-387 is a Mg(2+) binding site.

Belongs to the acetokinase family. Homodimer. Mg(2+) is required as a cofactor. Requires Mn(2+) as cofactor.

The protein resides in the cytoplasm. The enzyme catalyses acetate + ATP = acetyl phosphate + ADP. It functions in the pathway metabolic intermediate biosynthesis; acetyl-CoA biosynthesis; acetyl-CoA from acetate: step 1/2. Functionally, catalyzes the formation of acetyl phosphate from acetate and ATP. Can also catalyze the reverse reaction. This Yersinia pseudotuberculosis serotype IB (strain PB1/+) protein is Acetate kinase.